The following is a 275-amino-acid chain: T-cell ecto-ADP-ribosyltransferase 1 (275 aa).

The N-terminal stretch at 1-20 (MPSNICKFFLTWWLIQQVTG) is a signal peptide. 2 cysteine pairs are disulfide-bonded: Cys41/Cys243 and Cys141/Cys193. N-linked (GlcNAc...) asparagine glycosylation is present at Asn58. The 178-residue stretch at 61-238 (EKLKVAWEEA…IFLDSPKRKK (178 aa)) folds into the TR mART core domain. NAD(+)-binding residues include Tyr98, Arg146, and Gln164. Arg146 is an active-site residue. Ser167 is an active-site residue. Ser202 is a binding site for NAD(+). Glu209 is an active-site residue. A lipid anchor (GPI-anchor amidated serine) is attached at Ser246. Positions 247 to 275 (SAGTRESCVSLFLVVLTSLLVQLLCLAEP) are cleaved as a propeptide — removed in mature form.

This sequence belongs to the Arg-specific ADP-ribosyltransferase family. In terms of tissue distribution, postthymic T-cells.

It localises to the cell membrane. It carries out the reaction L-arginyl-[protein] + NAD(+) = N(omega)-(ADP-D-ribosyl)-L-arginyl-[protein] + nicotinamide + H(+). The catalysed reaction is NAD(+) + H2O = ADP-D-ribose + nicotinamide + H(+). Has NAD(+) glycohydrolase activity and extremely low ADP-ribosyltransferase activity. The chain is T-cell ecto-ADP-ribosyltransferase 1 (Art2a) from Rattus norvegicus (Rat).